Reading from the N-terminus, the 547-residue chain is Leiomodin-2 (547 aa).

Residues 1–47 (MSTFGYRRGLSKYESIDEDELLASLSAEELKELERELEDIEPDRNLP) form an interaction with tropomyosin alpha region. Interaction with actin regions lie at residues 1-161 (MSTF…SDNS), 162-497 (KPKI…KEIK), and 521-540 (AHEN…LKRV). Residues Ser11, Ser15, and Ser24 each carry the phosphoserine modification. The stretch at 16 to 41 (IDEDELLASLSAEELKELERELEDIE) forms a coiled coil. Disordered regions lie at residues 91 to 162 (KVAE…DNSK) and 352 to 533 (MDKQ…RGSS). Composition is skewed to acidic residues over residues 95–104 (DKEESEEELI) and 112–139 (VSEE…EEER). Residues 113–148 (SEEVYTEEEEEESQEEEEEEDSDEEERTIETAKGIN) are a coiled coil. The segment covering 149 to 160 (GTVNYDSVNSDN) has biased composition (polar residues). Residues 352–367 (MDKQRQKRLQEQKQQE) are compositionally biased toward basic and acidic residues. Ser400 carries the post-translational modification Phosphoserine. Pro residues predominate over residues 419 to 449 (ATPPPPPPPPPPPPPSSQRLPPPPPPPPPPL). Residues 465 to 475 (QQESAQRALQN) show a composition bias toward polar residues. The segment covering 477–487 (QKKKKGKKVKK) has biased composition (basic residues). Residues 494–512 (KEIKNSLRSVQEKKMEDSS) are compositionally biased toward basic and acidic residues. The region spanning 521 to 540 (AHENLMEAIRGSSIKQLKRV) is the WH2 domain.

Belongs to the tropomodulin family. Can bind at least three actin monomers and thereby provides a nucleus for actin filament formation. Interacts (via N-terminus) with tropomyosin alpha (TPM1) (via N-terminus). May also interact with TPM2 (via N-terminus). Interacts with FLII. As to expression, specifically expressed in heart and skeletal muscles, with higher levels in heart (at protein level). Not expressed in other tissues.

It is found in the cytoplasm. The protein resides in the myofibril. Its subcellular location is the sarcomere. It localises to the m line. The protein localises to the cytoskeleton. Functionally, mediates nucleation of actin filaments and thereby promotes actin polymerization. Plays a role in the regulation of actin filament length. Required for normal sarcomere organization in the heart, and for normal heart function. This chain is Leiomodin-2 (LMOD2), found in Homo sapiens (Human).